The sequence spans 429 residues: Glutamate-1-semialdehyde 2,1-aminomutase 2 (429 aa).

K268 carries the post-translational modification N6-(pyridoxal phosphate)lysine.

It belongs to the class-III pyridoxal-phosphate-dependent aminotransferase family. HemL subfamily. Homodimer. It depends on pyridoxal 5'-phosphate as a cofactor.

The protein localises to the cytoplasm. It catalyses the reaction (S)-4-amino-5-oxopentanoate = 5-aminolevulinate. It functions in the pathway porphyrin-containing compound metabolism; protoporphyrin-IX biosynthesis; 5-aminolevulinate from L-glutamyl-tRNA(Glu): step 2/2. The chain is Glutamate-1-semialdehyde 2,1-aminomutase 2 from Staphylococcus aureus (strain USA300).